The chain runs to 244 residues: Ribonuclease 3 2 (244 aa).

The RNase III domain occupies 11–136 (LKALLRRLGL…LLGALYLSVG (126 aa)). Glu-50 is a binding site for Mg(2+). Asp-54 is an active-site residue. Mg(2+) is bound by residues Asp-122 and Glu-125. The active site involves Glu-125. Residues 164-234 (NYKEALQAWT…AQQAYQDFIA (71 aa)) form the DRBM domain.

Belongs to the ribonuclease III family. As to quaternary structure, homodimer. Mg(2+) serves as cofactor.

It is found in the cytoplasm. It carries out the reaction Endonucleolytic cleavage to 5'-phosphomonoester.. Its function is as follows. Digests double-stranded RNA. Involved in the processing of primary rRNA transcript to yield the immediate precursors to the large and small rRNAs (23S and 16S). Processes some mRNAs, and tRNAs when they are encoded in the rRNA operon. Processes pre-crRNA and tracrRNA of type II CRISPR loci if present in the organism. The protein is Ribonuclease 3 2 of Synechocystis sp. (strain ATCC 27184 / PCC 6803 / Kazusa).